Reading from the N-terminus, the 212-residue chain is ER lumen protein-retaining receptor 1 (212 aa).

Residues 1–4 lie on the Lumenal side of the membrane; that stretch reads MNLF. A helical transmembrane segment spans residues 5 to 24; it reads RFLGDLSHLLAIILLLLKIW. Over 25 to 32 the chain is Cytoplasmic; the sequence is KSRSCAGI. Residues 33 to 52 form a helical membrane-spanning segment; the sequence is SGKSQVLFAVVFTARYLDLF. The segment at 47–48 is interaction with the K-D-E-L motif on target proteins; that stretch reads RY. The Lumenal portion of the chain corresponds to 53–58; the sequence is TNYISL. The chain crosses the membrane as a helical span at residues 59-79; that stretch reads YNTCMKVVYIACSFTTVWMIY. Residues 80-92 lie on the Cytoplasmic side of the membrane; the sequence is SKFKATYDGNHDT. The chain crosses the membrane as a helical span at residues 93–110; that stretch reads FRVEFLVVPTAILAFLVN. Over 111–116 the chain is Lumenal; it reads HDFTPL. Residues 117 to 135 form a helical membrane-spanning segment; the sequence is EILWTFSIYLESVAILPQL. Over 136 to 149 the chain is Cytoplasmic; sequence FMVSKTGEAETITS. Residues 150 to 168 form a helical membrane-spanning segment; that stretch reads HYLFALGVYRTLYLFNWIW. Residues 159 to 169 form an interaction with the K-D-E-L motif on target proteins region; the sequence is RTLYLFNWIWR. Residues 169–178 lie on the Lumenal side of the membrane; it reads RYHFEGFFDL. The chain crosses the membrane as a helical span at residues 179–199; it reads IAIVAGLVQTVLYCDFFYLYI. Residues 200 to 212 lie on the Cytoplasmic side of the membrane; the sequence is TKVLKGKKLSLPA. Residues 204–207 are important for recycling of cargo proteins with the sequence motif K-D-E-L from the Golgi to the endoplasmic reticulum; sequence KGKK. Ser209 is modified (phosphoserine; by PKA).

The protein belongs to the ERD2 family. As to quaternary structure, upon ligand binding the receptor oligomerizes and interacts with components of the transport machinery such as ARFGAP1 and ARF1. In terms of processing, phosphorylation by PKA at Ser-209 is required for endoplasmic reticulum retention function.

It is found in the golgi apparatus membrane. The protein localises to the cytoplasmic vesicle. Its subcellular location is the COPI-coated vesicle membrane. The protein resides in the endoplasmic reticulum membrane. It localises to the endoplasmic reticulum-Golgi intermediate compartment membrane. Its function is as follows. Receptor for the C-terminal sequence motif K-D-E-L that is present on endoplasmic reticulum resident proteins and that mediates their recycling from the Golgi back to the endoplasmic reticulum. The protein is ER lumen protein-retaining receptor 1 (Kdelr1) of Mus musculus (Mouse).